Consider the following 165-residue polypeptide: Phosphopantetheine adenylyltransferase (165 aa).

Threonine 9 contacts substrate. ATP contacts are provided by residues 9–10 and histidine 17; that span reads TF. Positions 41, 78, and 92 each coordinate substrate. Residues 93 to 95, glutamate 103, and 128 to 134 contribute to the ATP site; these read GLR and RQAIASK.

This sequence belongs to the bacterial CoaD family. Homohexamer. Requires Mg(2+) as cofactor.

It localises to the cytoplasm. The catalysed reaction is (R)-4'-phosphopantetheine + ATP + H(+) = 3'-dephospho-CoA + diphosphate. It functions in the pathway cofactor biosynthesis; coenzyme A biosynthesis; CoA from (R)-pantothenate: step 4/5. In terms of biological role, reversibly transfers an adenylyl group from ATP to 4'-phosphopantetheine, yielding dephospho-CoA (dPCoA) and pyrophosphate. This Ruegeria pomeroyi (strain ATCC 700808 / DSM 15171 / DSS-3) (Silicibacter pomeroyi) protein is Phosphopantetheine adenylyltransferase.